A 650-amino-acid chain; its full sequence is Acetyl-coenzyme A synthetase (650 aa).

Residues 190–193 (RGGR), Thr308, and Asn332 each bind CoA. Residues 384–386 (GEP), 408–413 (DTWWQT), Asp497, and Arg512 contribute to the ATP site. Ser520 is a CoA binding site. Arg523 lines the ATP pocket. Positions 534, 536, and 539 each coordinate Mg(2+). Arg581 contributes to the CoA binding site. At Lys606 the chain carries N6-acetyllysine.

It belongs to the ATP-dependent AMP-binding enzyme family. It depends on Mg(2+) as a cofactor. Post-translationally, acetylated. Deacetylation by the SIR2-homolog deacetylase activates the enzyme.

The enzyme catalyses acetate + ATP + CoA = acetyl-CoA + AMP + diphosphate. Catalyzes the conversion of acetate into acetyl-CoA (AcCoA), an essential intermediate at the junction of anabolic and catabolic pathways. AcsA undergoes a two-step reaction. In the first half reaction, AcsA combines acetate with ATP to form acetyl-adenylate (AcAMP) intermediate. In the second half reaction, it can then transfer the acetyl group from AcAMP to the sulfhydryl group of CoA, forming the product AcCoA. The protein is Acetyl-coenzyme A synthetase of Bradyrhizobium sp. (strain ORS 278).